Here is a 181-residue protein sequence, read N- to C-terminus: Acetylcholinesterase (181 aa).

Serine 76 acts as the Acyl-ester intermediate in catalysis. The active-site Charge relay system is the glutamate 132. Residues 162 to 181 (WQDQDNGGLPLTGNPTXPHN) form a disordered region.

Belongs to the type-B carboxylesterase/lipase family. The N-terminus is blocked. As to expression, expressed by the venom gland. Is also probably expressed by liver and muscle.

The protein resides in the synapse. The protein localises to the secreted. It is found in the cell membrane. The catalysed reaction is acetylcholine + H2O = choline + acetate + H(+). Its function is as follows. In venom, its toxic role is unclear: it could result in less musculatory control by rapidly hydrolyzing acetylcholine, or that it works synergistically with alkaline phosphatase (ALP) in paralyzing prey through hypotension. In muscle, it terminates signal transduction at the neuromuscular junction by rapid hydrolysis of the acetylcholine released into the synaptic cleft. In liver, its function is unclear: it could serve as a safeguard against any diffusion of acetylcholine from synapses into the circulation. The sequence is that of Acetylcholinesterase (ACHE) from Naja oxiana (Central Asian cobra).